The chain runs to 999 residues: uncharacterized protein (999 aa).

Residues 45-128 (NSNNIGNGNG…TPTITPSSPS (84 aa)) are compositionally biased toward low complexity. Residues 45-129 (NSNNIGNGNG…PTITPSSPSV (85 aa)) form a disordered region. Residues 723–767 (YQQSQQQQSQQQQQQQQQQQQQQQQQQQQQQQQQQQQQQQQQQQQ) adopt a coiled-coil conformation. Low complexity predominate over residues 873–887 (NDINNANNSNNNNNN). Positions 873–904 (NDINNANNSNNNNNNQSQVLLSPNRNKDGTLN) are disordered. The helical transmembrane segment at 976–996 (LFSLVLILAFIWFFFEIYFFF) threads the bilayer.

It is found in the membrane. This is an uncharacterized protein from Dictyostelium discoideum (Social amoeba).